Reading from the N-terminus, the 412-residue chain is Multifunctional CCA protein (412 aa).

Glycine 8 and arginine 11 together coordinate ATP. CTP-binding residues include glycine 8 and arginine 11. Positions 21 and 23 each coordinate Mg(2+). Positions 91, 137, and 140 each coordinate ATP. CTP is bound by residues arginine 91, arginine 137, and arginine 140. The HD domain maps to threonine 225–tyrosine 326.

This sequence belongs to the tRNA nucleotidyltransferase/poly(A) polymerase family. Bacterial CCA-adding enzyme type 1 subfamily. As to quaternary structure, monomer. Can also form homodimers and oligomers. The cofactor is Mg(2+). Requires Ni(2+) as cofactor.

The catalysed reaction is a tRNA precursor + 2 CTP + ATP = a tRNA with a 3' CCA end + 3 diphosphate. It catalyses the reaction a tRNA with a 3' CCA end + 2 CTP + ATP = a tRNA with a 3' CCACCA end + 3 diphosphate. Functionally, catalyzes the addition and repair of the essential 3'-terminal CCA sequence in tRNAs without using a nucleic acid template. Adds these three nucleotides in the order of C, C, and A to the tRNA nucleotide-73, using CTP and ATP as substrates and producing inorganic pyrophosphate. tRNA 3'-terminal CCA addition is required both for tRNA processing and repair. Also involved in tRNA surveillance by mediating tandem CCA addition to generate a CCACCA at the 3' terminus of unstable tRNAs. While stable tRNAs receive only 3'-terminal CCA, unstable tRNAs are marked with CCACCA and rapidly degraded. The chain is Multifunctional CCA protein from Nitrosomonas eutropha (strain DSM 101675 / C91 / Nm57).